Consider the following 523-residue polypeptide: 2-isopropylmalate synthase (523 aa).

The Pyruvate carboxyltransferase domain maps to 5–267 (VVIFDTTLRD…QTRINHNEIW (263 aa)). Residues Asp14, His202, His204, and Asn238 each coordinate Mn(2+). Residues 392 to 523 (RMDYFSVQSG…QNKENNKETV (132 aa)) are regulatory domain.

It belongs to the alpha-IPM synthase/homocitrate synthase family. LeuA type 1 subfamily. Homodimer. Requires Mn(2+) as cofactor.

It localises to the cytoplasm. It carries out the reaction 3-methyl-2-oxobutanoate + acetyl-CoA + H2O = (2S)-2-isopropylmalate + CoA + H(+). It functions in the pathway amino-acid biosynthesis; L-leucine biosynthesis; L-leucine from 3-methyl-2-oxobutanoate: step 1/4. Catalyzes the condensation of the acetyl group of acetyl-CoA with 3-methyl-2-oxobutanoate (2-ketoisovalerate) to form 3-carboxy-3-hydroxy-4-methylpentanoate (2-isopropylmalate). In Enterobacter sp. (strain 638), this protein is 2-isopropylmalate synthase.